The sequence spans 145 residues: Actin-depolymerizing factor 2 (145 aa).

One can recognise an ADF-H domain in the interval 13–145 (GMGVAPDIRD…DLEVLRERAH (133 aa)).

This sequence belongs to the actin-binding proteins ADF family.

Actin-depolymerizing protein. Severs actin filaments (F-actin) and binds to actin monomers. In Oryza sativa subsp. japonica (Rice), this protein is Actin-depolymerizing factor 2 (ADF2).